Reading from the N-terminus, the 172-residue chain is Sec-independent protein translocase protein TatB (172 aa).

A helical membrane pass occupies residues 1-21 (MIDLGISKLALIGAVALVVIG). The disordered stretch occupies residues 97 to 129 (GDPASRQTATQAAEWRPAPAKSRNGRNSWRNKQ).

It belongs to the TatB family. The Tat system comprises two distinct complexes: a TatABC complex, containing multiple copies of TatA, TatB and TatC subunits, and a separate TatA complex, containing only TatA subunits. Substrates initially bind to the TatABC complex, which probably triggers association of the separate TatA complex to form the active translocon.

The protein localises to the cell inner membrane. In terms of biological role, part of the twin-arginine translocation (Tat) system that transports large folded proteins containing a characteristic twin-arginine motif in their signal peptide across membranes. Together with TatC, TatB is part of a receptor directly interacting with Tat signal peptides. TatB may form an oligomeric binding site that transiently accommodates folded Tat precursor proteins before their translocation. In Ralstonia nicotianae (strain ATCC BAA-1114 / GMI1000) (Ralstonia solanacearum), this protein is Sec-independent protein translocase protein TatB.